Reading from the N-terminus, the 203-residue chain is Ras-related protein RABG3b (203 aa).

15–22 (GDSGVGKT) is a binding site for GTP. The Effector region motif lies at 37–45 (YKATIGADF). GTP is bound by residues 63–67 (DTAGQ), 125–128 (NKVD), and 158–159 (SA). Residues Cys-201 and Cys-203 are each lipidated (S-geranylgeranyl cysteine). Position 203 is a cysteine methyl ester (Cys-203).

The protein belongs to the small GTPase superfamily. Rab family. Interacts with VPS39. As to expression, expressed in xylem cells of inflorescence stems.

It is found in the cell membrane. Functionally, intracellular vesicle trafficking and protein transport. Functions in autophagy. Involved in xylem and tracheary element differentiation. The polypeptide is Ras-related protein RABG3b (RABG3B) (Arabidopsis thaliana (Mouse-ear cress)).